A 308-amino-acid chain; its full sequence is Pseudouridine-5'-phosphate glycosidase (308 aa).

Glu26 functions as the Proton donor in the catalytic mechanism. Lys87 and Val107 together coordinate substrate. Asp139 provides a ligand contact to Mn(2+). 141 to 143 lines the substrate pocket; the sequence is SAD. Lys160 acts as the Nucleophile in catalysis.

The protein belongs to the pseudouridine-5'-phosphate glycosidase family. Homotrimer. Mn(2+) serves as cofactor.

It catalyses the reaction D-ribose 5-phosphate + uracil = psi-UMP + H2O. Catalyzes the reversible cleavage of pseudouridine 5'-phosphate (PsiMP) to ribose 5-phosphate and uracil. Functions biologically in the cleavage direction, as part of a pseudouridine degradation pathway. In Legionella pneumophila subsp. pneumophila (strain Philadelphia 1 / ATCC 33152 / DSM 7513), this protein is Pseudouridine-5'-phosphate glycosidase.